Here is a 742-residue protein sequence, read N- to C-terminus: uncharacterized protein (742 aa).

The disordered stretch occupies residues 1–102; sequence MMLLKRSNDN…FTQTKPNNTD (102 aa). The span at 18–28 shows a compositional bias: low complexity; that stretch reads NRQNRQNNRQN. A compositionally biased stretch (basic and acidic residues) spans 48 to 57; the sequence is RDSSRMDPVD. Polar residues-rich tracts occupy residues 60 to 69 and 77 to 99; these read TLISFTSGKP and HDTG…TKPN.

This is an uncharacterized protein from Acanthamoeba polyphaga mimivirus (APMV).